The following is a 289-amino-acid chain: ADP-dependent (S)-NAD(P)H-hydrate dehydratase (289 aa).

Residues Val-9–Leu-286 enclose the YjeF C-terminal domain. Residues Ala-44 and His-160 each coordinate (6S)-NADPHX. AMP-binding positions include Lys-197–Ser-201 and Gly-226. Residue Asp-227 coordinates (6S)-NADPHX.

This sequence belongs to the NnrD/CARKD family. In terms of assembly, homotetramer. The cofactor is Mg(2+).

It carries out the reaction (6S)-NADHX + ADP = AMP + phosphate + NADH + H(+). It catalyses the reaction (6S)-NADPHX + ADP = AMP + phosphate + NADPH + H(+). Catalyzes the dehydration of the S-form of NAD(P)HX at the expense of ADP, which is converted to AMP. Together with NAD(P)HX epimerase, which catalyzes the epimerization of the S- and R-forms, the enzyme allows the repair of both epimers of NAD(P)HX, a damaged form of NAD(P)H that is a result of enzymatic or heat-dependent hydration. This is ADP-dependent (S)-NAD(P)H-hydrate dehydratase from Xanthomonas campestris pv. campestris (strain ATCC 33913 / DSM 3586 / NCPPB 528 / LMG 568 / P 25).